We begin with the raw amino-acid sequence, 346 residues long: NADH-ubiquinone oxidoreductase chain 2 (346 aa).

The next 11 helical transmembrane spans lie at 1–21, 26–46, 60–80, 96–116, 122–142, 151–171, 178–198, 199–219, 242–262, 274–294, and 320–340; these read MSPY…MLIS, WVFM…ILVW, FIVQ…SLSG, MMIM…YWVV, LNYI…LAVL, SSML…GGLG, LLAF…VAGS, LLGL…FSIL, VLLG…GFFG, LLLG…FYYL, and LSGL…LVGG.

This sequence belongs to the complex I subunit 2 family.

It is found in the mitochondrion inner membrane. It catalyses the reaction a ubiquinone + NADH + 5 H(+)(in) = a ubiquinol + NAD(+) + 4 H(+)(out). In terms of biological role, core subunit of the mitochondrial membrane respiratory chain NADH dehydrogenase (Complex I) that is believed to belong to the minimal assembly required for catalysis. Complex I functions in the transfer of electrons from NADH to the respiratory chain. The immediate electron acceptor for the enzyme is believed to be ubiquinone. The chain is NADH-ubiquinone oxidoreductase chain 2 (ND2) from Branchiostoma floridae (Florida lancelet).